Reading from the N-terminus, the 452-residue chain is UDP-N-acetylmuramoyl-tripeptide--D-alanyl-D-alanine ligase (452 aa).

107-113 provides a ligand contact to ATP; sequence GSSGKTS.

This sequence belongs to the MurCDEF family. MurF subfamily. As to quaternary structure, monomer.

Its subcellular location is the cytoplasm. The enzyme catalyses D-alanyl-D-alanine + UDP-N-acetyl-alpha-D-muramoyl-L-alanyl-gamma-D-glutamyl-meso-2,6-diaminopimelate + ATP = UDP-N-acetyl-alpha-D-muramoyl-L-alanyl-gamma-D-glutamyl-meso-2,6-diaminopimeloyl-D-alanyl-D-alanine + ADP + phosphate + H(+). Its pathway is cell wall biogenesis; peptidoglycan biosynthesis. In terms of biological role, involved in cell wall formation. Catalyzes the final step in the synthesis of UDP-N-acetylmuramoyl-pentapeptide, the precursor of murein. The sequence is that of UDP-N-acetylmuramoyl-tripeptide--D-alanyl-D-alanine ligase from Escherichia coli (strain K12).